The sequence spans 355 residues: UDP-N-acetylglucosamine--N-acetylmuramyl-(pentapeptide) pyrophosphoryl-undecaprenol N-acetylglucosamine transferase (355 aa).

UDP-N-acetyl-alpha-D-glucosamine-binding positions include 15 to 17, N127, R163, S191, I244, 263 to 268, and Q288; these read TGG and ALTVSE.

It belongs to the glycosyltransferase 28 family. MurG subfamily.

The protein resides in the cell inner membrane. It carries out the reaction di-trans,octa-cis-undecaprenyl diphospho-N-acetyl-alpha-D-muramoyl-L-alanyl-D-glutamyl-meso-2,6-diaminopimeloyl-D-alanyl-D-alanine + UDP-N-acetyl-alpha-D-glucosamine = di-trans,octa-cis-undecaprenyl diphospho-[N-acetyl-alpha-D-glucosaminyl-(1-&gt;4)]-N-acetyl-alpha-D-muramoyl-L-alanyl-D-glutamyl-meso-2,6-diaminopimeloyl-D-alanyl-D-alanine + UDP + H(+). Its pathway is cell wall biogenesis; peptidoglycan biosynthesis. Cell wall formation. Catalyzes the transfer of a GlcNAc subunit on undecaprenyl-pyrophosphoryl-MurNAc-pentapeptide (lipid intermediate I) to form undecaprenyl-pyrophosphoryl-MurNAc-(pentapeptide)GlcNAc (lipid intermediate II). This chain is UDP-N-acetylglucosamine--N-acetylmuramyl-(pentapeptide) pyrophosphoryl-undecaprenol N-acetylglucosamine transferase, found in Salmonella typhi.